Consider the following 929-residue polypeptide: MKLKETLNLGKTSFPMRAGLPNKEPIWQKEWEEAKVYQRRQELNQGKPHFTLHDGPPYANGNIHVGHAMNKISKDIIVRSKSMSGFYAPFIPGWDTHGLPIEQVLAKQGVKRKELDRAEYLKMCRDYALSQVDKQREDFKRLGVSADWENPYVTLTPDYEAAQIRVFGEMAKKGYIYQGAKPVYWSWSSESALAEAEIEYHDLVSTSLYYANKVKDGKGVLDTDTYIVVWTTTPFTVTASRGLTVGADIEYVLVKPAGETRKFIVASELLNSLSEKFAWEEVEVLNTYRGDELNQIVTEHPWDSEVDELVILGEHVTTDSGTGIVHTAPGFGEDDYNVGVANGLEVVVTVNERGIMMENAGPDFAGKFYDKVAPIVMEKLGDLLLAKEEISHSYPFDWRTKKPIIWRAVPQWFASVSKFRQEILDEIEKVKFHSEWGKVRLYNMIRDRGDWVISRQRAWGVPLPIFYAEDRTPIMTEETIEHVAKLFEEHGSVIWWERDAKDLLPEGFTHPGSPNGEFTKENDIMDVWFDSGSSWNGVVVNRPELTYPADLYLEGSDQYRGWFNSSLITSVANHGVAPYKQLLSQGFALDGKGEKMSKSLGNTIAPSDVEKQFGAEILRLWVTSVDTSNDVRISMDILSQVSESYRKIRNTLRFLIANTSDFNPTTDAVAFEDLRSVDQYMTIRFNQLVKNIRDAYENFEFLTIYKSLVNFINVELSAFYLDFAKDVVYIESAKSLERRQMQTVFYDILVKITKLLTPILPHTAEEIWSYLEFENEDYVQLSELPEAEDFANQDALLEKWNAFMDFRGKAQKALEEARNEKVIGKSLEAHLTIYPDAEVKELLESLNTNLAQLLIVSALTIAEGDVPESAVRFQGVSFTVERAEGEVCDRCRRIDPTTKERSYNATICNHCASIIEENFAEVVAEGFEV.

Residues 57–67 (PYANGNIHVGH) carry the 'HIGH' region motif. Position 554 (Glu554) interacts with L-isoleucyl-5'-AMP. The short motif at 595-599 (KMSKS) is the 'KMSKS' region element. Lys598 is an ATP binding site. Zn(2+)-binding residues include Cys888, Cys891, Cys908, and Cys911.

This sequence belongs to the class-I aminoacyl-tRNA synthetase family. IleS type 1 subfamily. In terms of assembly, monomer. Zn(2+) is required as a cofactor.

It localises to the cytoplasm. It carries out the reaction tRNA(Ile) + L-isoleucine + ATP = L-isoleucyl-tRNA(Ile) + AMP + diphosphate. Functionally, catalyzes the attachment of isoleucine to tRNA(Ile). As IleRS can inadvertently accommodate and process structurally similar amino acids such as valine, to avoid such errors it has two additional distinct tRNA(Ile)-dependent editing activities. One activity is designated as 'pretransfer' editing and involves the hydrolysis of activated Val-AMP. The other activity is designated 'posttransfer' editing and involves deacylation of mischarged Val-tRNA(Ile). The chain is Isoleucine--tRNA ligase from Streptococcus thermophilus (strain CNRZ 1066).